The primary structure comprises 685 residues: MALKPLNNIWIRRQQCPCGDWKCYIRLEEDESTITKSEIESTPTPTSQYDTVFTPYVGQIFTTDDEAFEYYSTFARKSGFSIRKARSTESQNLGVYRRDFVCYRSGFNQPRKKANVEHPRERKSVRCGCDGKLYLTKEVVDGVSHWYVSQFSNVHNHELLEDDQVRLLPAYRKIQQSDQERILLLSKAGFPVNRIVKLLELEKGVVSGQLPFIEKDVRNFVRACKKSVQENDAFMTEKRESDTLELLECCKGLAERDMDFVYDCTSDENQKVENIAWAYGDSVRGYSLFGDVVVFDTSYRSVPYGLLLGVFFGIDNNGKAMLLGCVLLQDESCRSFTWALQTFVRFMRGRHPQTILTDIDTGLKDAIGREMPNTNHVVFMSHIVSKLASWFSQTLGSHYEEFRAGFDMLCRAGNVDEFEQQWDLLVTRFGLVPDRHAALLYSCRASWLPCCIREHFVAQTMTSEFNLSIDSFLKRVVDGATCMQLLLEESALQVSAAASLAKQILPRFTYPSLKTCMPMEDHARGILTPYAFSVLQNEMVLSVQYAVAEMANGPFIVHHYKKMEGECCVIWNPENEEIQCSCKEFEHSGILCRHTLRVLTVKNCFHIPEQYFLLRWRQESPHVATENQNGQGIGDDSAQTFHSLTETLLTESMISKDRLDYANQELSLLIDRVRNTAPANCLYQP.

An FAR1 domain is found at Glu69–Glu161. The MULE domain maps to Val292–Ala388. The SWIM-type zinc finger occupies Gly565 to Asn603.

This sequence belongs to the FHY3/FAR1 family.

This is Putative protein FAR1-RELATED SEQUENCE 10 (FRS10) from Arabidopsis thaliana (Mouse-ear cress).